Reading from the N-terminus, the 161-residue chain is Nucleotide-binding protein Bcenmc03_2579 (161 aa).

This sequence belongs to the YajQ family.

Nucleotide-binding protein. The polypeptide is Nucleotide-binding protein Bcenmc03_2579 (Burkholderia orbicola (strain MC0-3)).